The following is a 213-amino-acid chain: Probable elongation factor 1-beta/1-delta 1 (213 aa).

It belongs to the EF-1-beta/EF-1-delta family. In terms of assembly, EF-1 is composed of 4 subunits: alpha, beta, delta, and gamma.

In terms of biological role, EF-1-beta and EF-1-delta stimulate the exchange of GDP bound to EF-1-alpha to GTP. The polypeptide is Probable elongation factor 1-beta/1-delta 1 (eef-1B.1) (Caenorhabditis elegans).